The primary structure comprises 244 residues: MPALLKRLLFQVGPHPNERTFTLSSVSTDGHYISLRPFVKPSGDELSFPFEWAFAGTNETVKANDQGNGVVTQDFNFWLDTNVYLNVPNTHRGEVNTTWKNWDSGCVEETGAVYPFGADKESVSFRELWQPVDPSREDLVIVSPNNEKFSSNARSIVLKVTDEAYDGLVIVIGRWIQGFLSQKNNNTIEGLNFIRLLEKDSGKSEFLLSYGKEVNKIPQSYENLKKGSTVTSNGLNWEVIEYHA.

Position 143 is a phosphoserine (Ser-143).

This sequence belongs to the HRI1 family. As to quaternary structure, interacts with HRR25. May interact with SEC72.

Its subcellular location is the cytoplasm. It is found in the nucleus. Its function is as follows. Unknown. Non essential. This chain is Protein HRI1 (HRI1), found in Saccharomyces cerevisiae (strain ATCC 204508 / S288c) (Baker's yeast).